A 699-amino-acid chain; its full sequence is Polyribonucleotide nucleotidyltransferase (699 aa).

D493 and D499 together coordinate Mg(2+). Residues 560 to 620 form the KH domain; that stretch reads PLIANIEIDP…NKVNQAIEYI (61 aa). An S1 motif domain is found at 630 to 697; sequence GDMFEGKITR…DSGRIQLGKA (68 aa).

This sequence belongs to the polyribonucleotide nucleotidyltransferase family. It depends on Mg(2+) as a cofactor.

Its subcellular location is the cytoplasm. It carries out the reaction RNA(n+1) + phosphate = RNA(n) + a ribonucleoside 5'-diphosphate. In terms of biological role, involved in mRNA degradation. Catalyzes the phosphorolysis of single-stranded polyribonucleotides processively in the 3'- to 5'-direction. The polypeptide is Polyribonucleotide nucleotidyltransferase (Thermosipho melanesiensis (strain DSM 12029 / CIP 104789 / BI429)).